The sequence spans 577 residues: Adenine deaminase (577 aa).

Belongs to the metallo-dependent hydrolases superfamily. Adenine deaminase family. Mn(2+) serves as cofactor.

It carries out the reaction adenine + H2O + H(+) = hypoxanthine + NH4(+). In Kosmotoga olearia (strain ATCC BAA-1733 / DSM 21960 / TBF 19.5.1), this protein is Adenine deaminase.